The primary structure comprises 217 residues: UPF0502 protein PFLU_2135 (217 aa).

The protein belongs to the UPF0502 family.

The sequence is that of UPF0502 protein PFLU_2135 from Pseudomonas fluorescens (strain SBW25).